We begin with the raw amino-acid sequence, 204 residues long: Putative uracil phosphoribosyltransferase urg2 (204 aa).

Residues Arg-75, Arg-100, and 126–134 (DPVMATGGT) each bind 5-phospho-alpha-D-ribose 1-diphosphate. A D-ribose 5-phosphate-binding site is contributed by Tyr-187. Uracil is bound by residues Leu-188 and 193–195 (GDI). Residue Asp-194 participates in 5-phospho-alpha-D-ribose 1-diphosphate binding.

Belongs to the UPRTase family. Mg(2+) serves as cofactor.

The protein resides in the cytoplasm. It localises to the nucleus. It carries out the reaction UMP + diphosphate = 5-phospho-alpha-D-ribose 1-diphosphate + uracil. It participates in pyrimidine metabolism; UMP biosynthesis via salvage pathway; UMP from uracil: step 1/1. Its activity is regulated as follows. Allosterically activated by GTP. Catalyzes the conversion of uracil and 5-phospho-alpha-D-ribose 1-diphosphate (PRPP) to UMP and diphosphate. This Schizosaccharomyces pombe (strain 972 / ATCC 24843) (Fission yeast) protein is Putative uracil phosphoribosyltransferase urg2.